Consider the following 176-residue polypeptide: NAD(P)H-quinone oxidoreductase subunit J (176 aa).

Residues 1 to 10 (MSETPTSPNQ) are compositionally biased toward polar residues. Residues 1 to 22 (MSETPTSPNQDLPEAPQAGPLS) are disordered.

This sequence belongs to the complex I 30 kDa subunit family. As to quaternary structure, NDH-1 can be composed of about 15 different subunits; different subcomplexes with different compositions have been identified which probably have different functions.

Its subcellular location is the cellular thylakoid membrane. It catalyses the reaction a plastoquinone + NADH + (n+1) H(+)(in) = a plastoquinol + NAD(+) + n H(+)(out). It carries out the reaction a plastoquinone + NADPH + (n+1) H(+)(in) = a plastoquinol + NADP(+) + n H(+)(out). NDH-1 shuttles electrons from an unknown electron donor, via FMN and iron-sulfur (Fe-S) centers, to quinones in the respiratory and/or the photosynthetic chain. The immediate electron acceptor for the enzyme in this species is believed to be plastoquinone. Couples the redox reaction to proton translocation, and thus conserves the redox energy in a proton gradient. Cyanobacterial NDH-1 also plays a role in inorganic carbon-concentration. This is NAD(P)H-quinone oxidoreductase subunit J from Synechococcus sp. (strain RCC307).